A 1372-amino-acid polypeptide reads, in one-letter code: DNA-directed RNA polymerase subunit beta' (1372 aa).

Zn(2+)-binding residues include C69, C71, C84, and C87. Positions 460, 462, and 464 each coordinate Mg(2+). 4 residues coordinate Zn(2+): C808, C882, C889, and C892.

Belongs to the RNA polymerase beta' chain family. The RNAP catalytic core consists of 2 alpha, 1 beta, 1 beta' and 1 omega subunit. When a sigma factor is associated with the core the holoenzyme is formed, which can initiate transcription. It depends on Mg(2+) as a cofactor. Zn(2+) is required as a cofactor.

It carries out the reaction RNA(n) + a ribonucleoside 5'-triphosphate = RNA(n+1) + diphosphate. Functionally, DNA-dependent RNA polymerase catalyzes the transcription of DNA into RNA using the four ribonucleoside triphosphates as substrates. In Rickettsia bellii (strain OSU 85-389), this protein is DNA-directed RNA polymerase subunit beta'.